We begin with the raw amino-acid sequence, 255 residues long: Ribonuclease HII (255 aa).

One can recognise an RNase H type-2 domain in the interval glutamate 70 to lysine 255. The a divalent metal cation site is built by aspartate 76, glutamate 77, and aspartate 168.

Belongs to the RNase HII family. It depends on Mn(2+) as a cofactor. Requires Mg(2+) as cofactor.

The protein localises to the cytoplasm. The catalysed reaction is Endonucleolytic cleavage to 5'-phosphomonoester.. Its function is as follows. Endonuclease that specifically degrades the RNA of RNA-DNA hybrids. The chain is Ribonuclease HII from Streptococcus thermophilus (strain ATCC BAA-491 / LMD-9).